The sequence spans 795 residues: MKFSESWLREWVNPAVTTDELTHQITMAGLEVDDVLPVAGTFNGVKVGHVVECGQHPDADKLRVTKVDVGEEELLDIVCGAANCRQGLKVAVATVGAVLPGDFKIKKAKLRGQPSHGMLCSFTELGIDVESDGIMELAIDAPIGMDFRDFLALNDVTVDVDLTSNRADCFSIRGMAREVGVLNRADVTEPSVAPVAPSIDDTVAIEVKAPAACPRYLGRVVKNVNVQAKTPLWMQEKLRRCGIRSIDPVVDITNFVLLEQGQPMHAFDLAKIDGGIVVRLAEQGEKITLLDGSEAELNADTLVVADHNKALAIAGIFGGEESGVTSETKDVLLECAFFAPDHIRGRARSYGLHTDSSMRFERGVDYALQVSAMERATALLVEICGGEVAPVVAVESEAELPKPNKVALRRTKLDNLLGHHIADSDVVEILERLGMTVETTAEGWVAVAPTWRFDIAIEQDLVEEVGRIYGYDNIPNQNPAAALKMHDHQEANIPLKRVRDLLVDRGYHEAITYSFVEPEQQKLVVPGVDALILPNPISAEMSAMRLGLIQGLLNTVVHNQKRQQPRVRLFEYGLRFIPCDTAENGMRQEPMLAGVIAGTRSEEHWNIDTNTVDFFDLKGDVEAILELSANDKAYSFVAAKHPALHPGQSAAIVVDGKEIGVIGTVHPELERKFGLNGRTIVFEIEWSAINRKVIPEAVALSKFPANRRDIAVVVDEAVASGDIVNACLEVGGEFLKAAKLFDVYVGKGVEEGKKSLAIALTLQSNERTLEDADIAGAVDAIVAHVSEKFGASLRD.

A tRNA-binding domain is found at 39–148 (AGTFNGVKVG…IDAPIGMDFR (110 aa)). Positions 401-476 (PKPNKVALRR…RIYGYDNIPN (76 aa)) constitute a B5 domain. Asp-454, Asp-460, Glu-463, and Glu-464 together coordinate Mg(2+). The FDX-ACB domain occupies 701–794 (SKFPANRRDI…VSEKFGASLR (94 aa)).

The protein belongs to the phenylalanyl-tRNA synthetase beta subunit family. Type 1 subfamily. Tetramer of two alpha and two beta subunits. Mg(2+) is required as a cofactor.

Its subcellular location is the cytoplasm. The enzyme catalyses tRNA(Phe) + L-phenylalanine + ATP = L-phenylalanyl-tRNA(Phe) + AMP + diphosphate + H(+). The sequence is that of Phenylalanine--tRNA ligase beta subunit from Vibrio vulnificus (strain YJ016).